The primary structure comprises 129 residues: MKEVIDTVGRRKTSVARVFMTPGKGRVIINKLPAEEYFKDEVKCRVALRPLVLAEKTEDFDIKVNVHGGGISGQSGAVSLAIARALAETDDSVRAVFKPERLLTRDPRMVERKKFGRKKARKSFQFSKR.

It belongs to the universal ribosomal protein uS9 family.

The chain is Small ribosomal subunit protein uS9 from Chlorobium phaeovibrioides (strain DSM 265 / 1930) (Prosthecochloris vibrioformis (strain DSM 265)).